Here is a 283-residue protein sequence, read N- to C-terminus: Polyamine aminopropyltransferase (283 aa).

A PABS domain is found at 5–240; it reads NTWFTEIHQD…GWWTATMACK (236 aa). Residue Gln33 coordinates S-methyl-5'-thioadenosine. Spermidine is bound by residues His64 and Asp88. Residues Asp108 and 139-140 each bind S-methyl-5'-thioadenosine; that span reads DG. The Proton acceptor role is filled by Asp158. 158–161 is a binding site for spermidine; that stretch reads DSTD. Pro165 serves as a coordination point for S-methyl-5'-thioadenosine.

This sequence belongs to the spermidine/spermine synthase family. In terms of assembly, homodimer or homotetramer.

It is found in the cytoplasm. It carries out the reaction S-adenosyl 3-(methylsulfanyl)propylamine + putrescine = S-methyl-5'-thioadenosine + spermidine + H(+). The protein operates within amine and polyamine biosynthesis; spermidine biosynthesis; spermidine from putrescine: step 1/1. Its function is as follows. Catalyzes the irreversible transfer of a propylamine group from the amino donor S-adenosylmethioninamine (decarboxy-AdoMet) to putrescine (1,4-diaminobutane) to yield spermidine. The chain is Polyamine aminopropyltransferase from Thioalkalivibrio sulfidiphilus (strain HL-EbGR7).